A 142-amino-acid chain; its full sequence is Small ribosomal subunit protein bS16 (142 aa).

A disordered region spans residues 101-142 (RPSFDALGGDDAGKGEAITQKKKAEKKDEAAAESSSSESTEA). Residues 132–142 (AESSSSESTEA) show a composition bias toward low complexity.

This sequence belongs to the bacterial ribosomal protein bS16 family.

The chain is Small ribosomal subunit protein bS16 from Streptomyces avermitilis (strain ATCC 31267 / DSM 46492 / JCM 5070 / NBRC 14893 / NCIMB 12804 / NRRL 8165 / MA-4680).